The sequence spans 422 residues: UDP-N-acetylmuramoylalanine--D-glutamate ligase (422 aa).

ATP is bound at residue 102 to 108 (GTNGKTT).

This sequence belongs to the MurCDEF family.

The protein resides in the cytoplasm. It carries out the reaction UDP-N-acetyl-alpha-D-muramoyl-L-alanine + D-glutamate + ATP = UDP-N-acetyl-alpha-D-muramoyl-L-alanyl-D-glutamate + ADP + phosphate + H(+). It participates in cell wall biogenesis; peptidoglycan biosynthesis. Functionally, cell wall formation. Catalyzes the addition of glutamate to the nucleotide precursor UDP-N-acetylmuramoyl-L-alanine (UMA). This Helicobacter pylori (strain ATCC 700392 / 26695) (Campylobacter pylori) protein is UDP-N-acetylmuramoylalanine--D-glutamate ligase.